We begin with the raw amino-acid sequence, 485 residues long: UDP-N-acetylmuramate--L-alanine ligase (485 aa).

125–131 is a binding site for ATP; sequence GTHGKTT.

The protein belongs to the MurCDEF family.

The protein resides in the cytoplasm. The catalysed reaction is UDP-N-acetyl-alpha-D-muramate + L-alanine + ATP = UDP-N-acetyl-alpha-D-muramoyl-L-alanine + ADP + phosphate + H(+). The protein operates within cell wall biogenesis; peptidoglycan biosynthesis. Functionally, cell wall formation. In Stutzerimonas stutzeri (strain A1501) (Pseudomonas stutzeri), this protein is UDP-N-acetylmuramate--L-alanine ligase.